Here is a 225-residue protein sequence, read N- to C-terminus: Sodium-dependent neutral amino acid transporter SLC6A17 (225 aa).

Helical transmembrane passes span 1–8 (NVWRFPYL), 16–35 (AYLV…LFFL), and 60–80 (GIGF…NVII). Residues 81 to 143 (GWSIFYFFKS…NSISESGGLN (63 aa)) lie on the Extracellular side of the membrane. A glycan (N-linked (GlcNAc...) asparagine) is linked at asparagine 105. Transmembrane regions (helical) follow at residues 144–162 (WKMT…MAVV), 171–188 (VMYF…CFLV), and 224–225 (IF).

This sequence belongs to the sodium:neurotransmitter symporter (SNF) (TC 2.A.22) family.

The protein resides in the cytoplasmic vesicle. It localises to the secretory vesicle. It is found in the synaptic vesicle membrane. Its subcellular location is the postsynapse. The protein localises to the presynapse. The catalysed reaction is L-proline(in) + Na(+)(in) = L-proline(out) + Na(+)(out). It catalyses the reaction L-leucine(in) + Na(+)(in) = L-leucine(out) + Na(+)(out). It carries out the reaction glycine(in) + Na(+)(in) = glycine(out) + Na(+)(out). The enzyme catalyses L-alanine(in) + Na(+)(in) = L-alanine(out) + Na(+)(out). The catalysed reaction is L-glutamine(in) + Na(+)(in) = L-glutamine(out) + Na(+)(out). Synaptic vesicle transporter with apparent selectivity for neutral amino acids. The transport is sodium-coupled but chloride-independent, likely driven by the proton electrochemical gradient generated by vacuolar H(+)-ATPase in an overall electrogenic mechanism. May contribute to the synaptic uptake of neurotransmitter precursors in a process coupled in part to vesicle exocytosis. This Bos taurus (Bovine) protein is Sodium-dependent neutral amino acid transporter SLC6A17.